Here is a 126-residue protein sequence, read N- to C-terminus: Precursor of CEP2 (126 aa).

The signal sequence occupies residues 1 to 19 (MKLFIITVVTILTISRVFD). Positions 20–80 (KTPATTEARK…ENNLKNRFIN (61 aa)) are excised as a propeptide. Hydroxyproline is present on residues Pro-84 and Pro-87. Positions 96 to 105 (PRVLNNKFTN) are excised as a propeptide. Residues Pro-109, Pro-112, and Pro-116 each carry the hydroxyproline modification. Positions 121-126 (PGVVNV) are excised as a propeptide.

It belongs to the C-terminally encoded plant signaling peptide (CEP) family. Interacts with CEP receptors (e.g. CEPR1 and CEPR2). In terms of processing, the mature small signaling peptide is generated by proteolytic processing of the longer precursor. In terms of tissue distribution, mostly expressed in roots. Present in cotyledons, shoot apical meristem (SAM), leaves, inflorescence stems and flowers.

It localises to the secreted. Its subcellular location is the extracellular space. The protein localises to the apoplast. Extracellular signaling peptide that represses primary root growth rate. Negatively regulates the number of leaves and flowering, and modulates leaf morphology. Regulates systemic nitrogen (N)-demand signaling. Mediates up-regulation of genes involved in N uptake and assimilation pathways. This Arabidopsis thaliana (Mouse-ear cress) protein is Precursor of CEP2.